Here is a 172-residue protein sequence, read N- to C-terminus: Shikimate kinase 2 (172 aa).

9–16 (GARAAGKT) is an ATP binding site.

The protein belongs to the shikimate kinase family.

It is found in the cytoplasm. It catalyses the reaction shikimate + ATP = 3-phosphoshikimate + ADP + H(+). Its pathway is metabolic intermediate biosynthesis; chorismate biosynthesis; chorismate from D-erythrose 4-phosphate and phosphoenolpyruvate: step 5/7. This Syntrophotalea carbinolica (strain DSM 2380 / NBRC 103641 / GraBd1) (Pelobacter carbinolicus) protein is Shikimate kinase 2.